A 611-amino-acid chain; its full sequence is Dihydroxy-acid dehydratase (611 aa).

Residue D81 participates in Mg(2+) binding. Residue C122 coordinates [2Fe-2S] cluster. Mg(2+) is bound by residues D123 and K124. The residue at position 124 (K124) is an N6-carboxylysine. C195 is a [2Fe-2S] cluster binding site. E491 serves as a coordination point for Mg(2+). Catalysis depends on S517, which acts as the Proton acceptor.

Belongs to the IlvD/Edd family. In terms of assembly, homodimer. Requires [2Fe-2S] cluster as cofactor. Mg(2+) is required as a cofactor.

The enzyme catalyses (2R)-2,3-dihydroxy-3-methylbutanoate = 3-methyl-2-oxobutanoate + H2O. It carries out the reaction (2R,3R)-2,3-dihydroxy-3-methylpentanoate = (S)-3-methyl-2-oxopentanoate + H2O. Its pathway is amino-acid biosynthesis; L-isoleucine biosynthesis; L-isoleucine from 2-oxobutanoate: step 3/4. The protein operates within amino-acid biosynthesis; L-valine biosynthesis; L-valine from pyruvate: step 3/4. In terms of biological role, functions in the biosynthesis of branched-chain amino acids. Catalyzes the dehydration of (2R,3R)-2,3-dihydroxy-3-methylpentanoate (2,3-dihydroxy-3-methylvalerate) into 2-oxo-3-methylpentanoate (2-oxo-3-methylvalerate) and of (2R)-2,3-dihydroxy-3-methylbutanoate (2,3-dihydroxyisovalerate) into 2-oxo-3-methylbutanoate (2-oxoisovalerate), the penultimate precursor to L-isoleucine and L-valine, respectively. In Agrobacterium fabrum (strain C58 / ATCC 33970) (Agrobacterium tumefaciens (strain C58)), this protein is Dihydroxy-acid dehydratase.